We begin with the raw amino-acid sequence, 106 residues long: Urease subunit beta (106 aa).

The protein belongs to the urease beta subunit family. Heterotrimer of UreA (gamma), UreB (beta) and UreC (alpha) subunits. Three heterotrimers associate to form the active enzyme.

The protein localises to the cytoplasm. It carries out the reaction urea + 2 H2O + H(+) = hydrogencarbonate + 2 NH4(+). The protein operates within nitrogen metabolism; urea degradation; CO(2) and NH(3) from urea (urease route): step 1/1. This is Urease subunit beta from Prochlorococcus marinus (strain AS9601).